A 363-amino-acid polypeptide reads, in one-letter code: UDP-N-acetylglucosamine--N-acetylmuramyl-(pentapeptide) pyrophosphoryl-undecaprenol N-acetylglucosamine transferase (363 aa).

UDP-N-acetyl-alpha-D-glucosamine-binding positions include Thr-16 to Gly-18, Asn-128, Arg-167, Ser-195, Ile-249, Ala-268 to Glu-273, and Gln-294.

Belongs to the glycosyltransferase 28 family. MurG subfamily.

The protein resides in the cell inner membrane. The catalysed reaction is di-trans,octa-cis-undecaprenyl diphospho-N-acetyl-alpha-D-muramoyl-L-alanyl-D-glutamyl-meso-2,6-diaminopimeloyl-D-alanyl-D-alanine + UDP-N-acetyl-alpha-D-glucosamine = di-trans,octa-cis-undecaprenyl diphospho-[N-acetyl-alpha-D-glucosaminyl-(1-&gt;4)]-N-acetyl-alpha-D-muramoyl-L-alanyl-D-glutamyl-meso-2,6-diaminopimeloyl-D-alanyl-D-alanine + UDP + H(+). Its pathway is cell wall biogenesis; peptidoglycan biosynthesis. In terms of biological role, cell wall formation. Catalyzes the transfer of a GlcNAc subunit on undecaprenyl-pyrophosphoryl-MurNAc-pentapeptide (lipid intermediate I) to form undecaprenyl-pyrophosphoryl-MurNAc-(pentapeptide)GlcNAc (lipid intermediate II). The polypeptide is UDP-N-acetylglucosamine--N-acetylmuramyl-(pentapeptide) pyrophosphoryl-undecaprenol N-acetylglucosamine transferase (Marinobacter nauticus (strain ATCC 700491 / DSM 11845 / VT8) (Marinobacter aquaeolei)).